Consider the following 251-residue polypeptide: N-acetylmuramoyl-L-alanine amidase CwlA (251 aa).

A signal peptide spans 1–37; sequence MEIKQMLVPVSRYSVLCPYEMNPTEITFHNTYNDAPA. The N-acetylmuramoyl-L-alanine amidase domain occupies 38–140; the sequence is INERNNVANN…QERNGKYCPH (103 aa).

The protein belongs to the N-acetylmuramoyl-L-alanine amidase 2 family.

The protein localises to the secreted. It catalyses the reaction Hydrolyzes the link between N-acetylmuramoyl residues and L-amino acid residues in certain cell-wall glycopeptides.. In terms of biological role, autolysins are involved in some important biological processes such as cell separation, cell-wall turnover, competence for genetic transformation, formation of the flagella and sporulation. This Bacillus sp protein is N-acetylmuramoyl-L-alanine amidase CwlA (cwlA).